The sequence spans 236 residues: Large ribosomal subunit protein uL1 (236 aa).

The protein belongs to the universal ribosomal protein uL1 family. Part of the 50S ribosomal subunit.

Its function is as follows. Binds directly to 23S rRNA. The L1 stalk is quite mobile in the ribosome, and is involved in E site tRNA release. In terms of biological role, protein L1 is also a translational repressor protein, it controls the translation of the L11 operon by binding to its mRNA. This chain is Large ribosomal subunit protein uL1, found in Corynebacterium efficiens (strain DSM 44549 / YS-314 / AJ 12310 / JCM 11189 / NBRC 100395).